A 232-amino-acid chain; its full sequence is tRNA1(Val) (adenine(37)-N6)-methyltransferase (232 aa).

It belongs to the methyltransferase superfamily. tRNA (adenine-N(6)-)-methyltransferase family.

It is found in the cytoplasm. The enzyme catalyses adenosine(37) in tRNA1(Val) + S-adenosyl-L-methionine = N(6)-methyladenosine(37) in tRNA1(Val) + S-adenosyl-L-homocysteine + H(+). Its function is as follows. Specifically methylates the adenine in position 37 of tRNA(1)(Val) (anticodon cmo5UAC). This is tRNA1(Val) (adenine(37)-N6)-methyltransferase from Pseudoalteromonas translucida (strain TAC 125).